Consider the following 1149-residue polypeptide: Potassium channel subfamily U member 1 (1149 aa).

Over 1–24 (MFQTKLRNESWEDLQKMSCTTEIQ) the chain is Extracellular. Residues 25 to 45 (VAFILSSFMTFISGLIILLIF) form a helical membrane-spanning segment. Topologically, residues 46–101 (RLIWRTVKKWQIIKGTGIILELFTSGSIRRNHVRSLHFHGRFRDRIEMLLSAQTFV) are cytoplasmic. A helical transmembrane segment spans residues 102-122 (GQVLVILVFVLSIGSLIIYFI). Residues 123–138 (NSADPVGSCSSYEDKT) lie on the Extracellular side of the membrane. Residues 139 to 159 (IPVDLVFNAFFSFYFGLRFMA) form a helical membrane-spanning segment. The Cytoplasmic segment spans residues 160 to 163 (ADDK). A helical membrane pass occupies residues 164 to 184 (IKFWLEMNSIVDIFTIPPTFI). Topologically, residues 185–188 (SYYL) are extracellular. A helical; Voltage-sensor membrane pass occupies residues 189 to 209 (KSNWLGLRFLRALRLLELPRI). The Cytoplasmic segment spans residues 210–226 (LQILRAIKTSNSVKFSK). Residues 227-247 (LLSIVLSTWFTAAGFIHLVEN) traverse the membrane as a helical segment. The Extracellular portion of the chain corresponds to 248 to 259 (SGDPWLKGRNSQ). Residues 260-282 (NISYFDSVYLVMATTSTVGFGDV) constitute an intramembrane region (pore-forming). The short motif at 276–279 (TVGF) is the Selectivity for potassium element. Over 283–291 (VAKTSLGRT) the chain is Extracellular. A helical transmembrane segment spans residues 292-312 (FIIFFTLGSLILFANYIPEMV). The Cytoplasmic segment spans residues 313-1149 (ELFANKRKYT…EDPFAYSEPL (837 aa)). 2 RCK N-terminal domains span residues 331 to 473 (KKFI…DNII) and 713 to 884 (RNHI…EGSL). A compositionally biased stretch (low complexity) spans 829-845 (IDSSSDSSPSVSEETAS). Disordered stretches follow at residues 829–851 (IDSSSDSSPSVSEETASCTNGHN) and 1106–1149 (ARNQ…SEPL). The segment covering 1106–1120 (ARNQIRTNSSITSQK) has biased composition (polar residues).

This sequence belongs to the potassium channel family. Calcium-activated (TC 1.A.1.3) subfamily. KCa5.1/KCNU1 sub-subfamily. In terms of assembly, homotetramer; which constitutes the calcium-activated potassium channel. Interacts with LRRC52; this interaction changes some channel gating properties, such as shifting gating to more negative potentials at a given pH. In terms of tissue distribution, testis-specific.

The protein resides in the cell membrane. Its subcellular location is the cell projection. It is found in the cilium. The protein localises to the flagellum membrane. It catalyses the reaction K(+)(in) = K(+)(out). With respect to regulation, regulated by changes in cytosolic pH; activated by alkalization. VU0546110 acts as a selective inhibitor. The auxiliary subunit LRRC52 shifts the activation of KCNU1 to more negative potentials at a given pH. Functionally, testis-specific potassium channel activated by both intracellular pH and membrane voltage that mediates export of K(+). Represents the primary spermatozoan K(+) current. The channel underlies a pH-triggered membrane hyperpolarization during the process of sperm capacitation, as sperm encounter the alkaline environment near the ovum in the female reproductive tract, thereby playing an essential for male fertility. The protein is Potassium channel subfamily U member 1 (KCNU1) of Macaca fascicularis (Crab-eating macaque).